Here is a 470-residue protein sequence, read N- to C-terminus: ATP synthase subunit beta 2 (470 aa).

155–162 serves as a coordination point for ATP; the sequence is GGAGVGKT.

It belongs to the ATPase alpha/beta chains family. As to quaternary structure, F-type ATPases have 2 components, CF(1) - the catalytic core - and CF(0) - the membrane proton channel. CF(1) has five subunits: alpha(3), beta(3), gamma(1), delta(1), epsilon(1). CF(0) has three main subunits: a(1), b(2) and c(9-12). The alpha and beta chains form an alternating ring which encloses part of the gamma chain. CF(1) is attached to CF(0) by a central stalk formed by the gamma and epsilon chains, while a peripheral stalk is formed by the delta and b chains.

It localises to the cell inner membrane. The enzyme catalyses ATP + H2O + 4 H(+)(in) = ADP + phosphate + 5 H(+)(out). Produces ATP from ADP in the presence of a proton gradient across the membrane. The catalytic sites are hosted primarily by the beta subunits. The polypeptide is ATP synthase subunit beta 2 (Nitrosospira multiformis (strain ATCC 25196 / NCIMB 11849 / C 71)).